Consider the following 43-residue polypeptide: Alpha-1-antiproteinase 4 (43 aa).

Belongs to the serpin family. Post-translationally, N-glycosylated with carbohydrates having biantennary side chains. In terms of tissue distribution, plasma.

Its subcellular location is the secreted. This is Alpha-1-antiproteinase 4 from Equus caballus (Horse).